We begin with the raw amino-acid sequence, 259 residues long: Probable ATP-dependent transporter ycf16 (259 aa).

Positions 9 to 253 constitute an ABC transporter domain; that stretch reads LEVKNLKAQV…EIKGYDWLNE (245 aa). 41-48 is a binding site for ATP; it reads GPNGSGKS.

The protein belongs to the ABC transporter superfamily. Ycf16 family.

It is found in the plastid. The protein resides in the cyanelle. The protein is Probable ATP-dependent transporter ycf16 (ycf16) of Cyanophora paradoxa.